The following is a 99-amino-acid chain: Large ribosomal subunit protein eL21 (99 aa).

The span at 1 to 14 (MPNSNGPLSNSGGK) shows a compositional bias: polar residues. Residues 1–38 (MPNSNGPLSNSGGKLQNDPRDRGTSPPQRAIADYDDGE) form a disordered region.

The protein belongs to the eukaryotic ribosomal protein eL21 family.

In Halobacterium salinarum (strain ATCC 29341 / DSM 671 / R1), this protein is Large ribosomal subunit protein eL21.